Reading from the N-terminus, the 744-residue chain is Polyribonucleotide nucleotidyltransferase (744 aa).

Mg(2+)-binding residues include Asp-515 and Asp-521. Residues 581-640 enclose the KH domain; the sequence is PRVITVQVPVDKIGEVIGPKGKMINQIQDDTGADISIEDDGTVFIGATDGPSAEAARQAI. One can recognise an S1 motif domain in the interval 652-724; sequence GERFVGTVVK…PRGKLSLHAV (73 aa).

It belongs to the polyribonucleotide nucleotidyltransferase family. The cofactor is Mg(2+).

The protein resides in the cytoplasm. The catalysed reaction is RNA(n+1) + phosphate = RNA(n) + a ribonucleoside 5'-diphosphate. Functionally, involved in mRNA degradation. Catalyzes the phosphorolysis of single-stranded polyribonucleotides processively in the 3'- to 5'-direction. This Beutenbergia cavernae (strain ATCC BAA-8 / DSM 12333 / CCUG 43141 / JCM 11478 / NBRC 16432 / NCIMB 13614 / HKI 0122) protein is Polyribonucleotide nucleotidyltransferase.